The primary structure comprises 64 residues: Large ribosomal subunit protein bL32 (64 aa).

Over residues 1 to 16 the composition is skewed to basic residues; it reads MAVPKHRKSKAKKRSR. The disordered stretch occupies residues 1–22; it reads MAVPKHRKSKAKKRSRQAANDK.

It belongs to the bacterial ribosomal protein bL32 family.

The chain is Large ribosomal subunit protein bL32 from Brachyspira hyodysenteriae (strain ATCC 49526 / WA1).